We begin with the raw amino-acid sequence, 216 residues long: tRNA (guanine-N(7)-)-methyltransferase (216 aa).

E44, E69, N97, and D119 together coordinate S-adenosyl-L-methionine. D119 is an active-site residue. Substrate contacts are provided by residues K123, D155, and 192 to 195; that span reads TEYE.

The protein belongs to the class I-like SAM-binding methyltransferase superfamily. TrmB family.

It catalyses the reaction guanosine(46) in tRNA + S-adenosyl-L-methionine = N(7)-methylguanosine(46) in tRNA + S-adenosyl-L-homocysteine. Its pathway is tRNA modification; N(7)-methylguanine-tRNA biosynthesis. Functionally, catalyzes the formation of N(7)-methylguanine at position 46 (m7G46) in tRNA. The polypeptide is tRNA (guanine-N(7)-)-methyltransferase (Lysinibacillus sphaericus (strain C3-41)).